The following is a 461-amino-acid chain: Phosphoglucosamine mutase (461 aa).

Ser107 acts as the Phosphoserine intermediate in catalysis. Mg(2+)-binding residues include Ser107, Asp254, Asp256, and Asp258. Ser107 carries the post-translational modification Phosphoserine.

Belongs to the phosphohexose mutase family. Mg(2+) serves as cofactor. In terms of processing, activated by phosphorylation.

It catalyses the reaction alpha-D-glucosamine 1-phosphate = D-glucosamine 6-phosphate. In terms of biological role, catalyzes the conversion of glucosamine-6-phosphate to glucosamine-1-phosphate. The chain is Phosphoglucosamine mutase from Bifidobacterium longum (strain DJO10A).